We begin with the raw amino-acid sequence, 311 residues long: Ornithine carbamoyltransferase (311 aa).

Carbamoyl phosphate contacts are provided by residues 54–57 (STRT), Q81, R105, and 132–135 (HPCQ). L-ornithine contacts are provided by residues N163, D221, and 225-226 (SM). Carbamoyl phosphate contacts are provided by residues 261–262 (CL) and R289.

Belongs to the aspartate/ornithine carbamoyltransferase superfamily. OTCase family.

The protein resides in the cytoplasm. The enzyme catalyses carbamoyl phosphate + L-ornithine = L-citrulline + phosphate + H(+). It participates in amino-acid degradation; L-arginine degradation via ADI pathway; carbamoyl phosphate from L-arginine: step 2/2. In terms of biological role, reversibly catalyzes the transfer of the carbamoyl group from carbamoyl phosphate (CP) to the N(epsilon) atom of ornithine (ORN) to produce L-citrulline. The protein is Ornithine carbamoyltransferase of Azoarcus sp. (strain BH72).